Reading from the N-terminus, the 291-residue chain is Lipoyl synthase (291 aa).

7 residues coordinate [4Fe-4S] cluster: cysteine 36, cysteine 41, cysteine 47, cysteine 62, cysteine 66, cysteine 69, and serine 275. One can recognise a Radical SAM core domain in the interval 48–264 (FSKKTATFLI…KEFAISIGFK (217 aa)).

Belongs to the radical SAM superfamily. Lipoyl synthase family. [4Fe-4S] cluster serves as cofactor.

It localises to the cytoplasm. The catalysed reaction is [[Fe-S] cluster scaffold protein carrying a second [4Fe-4S](2+) cluster] + N(6)-octanoyl-L-lysyl-[protein] + 2 oxidized [2Fe-2S]-[ferredoxin] + 2 S-adenosyl-L-methionine + 4 H(+) = [[Fe-S] cluster scaffold protein] + N(6)-[(R)-dihydrolipoyl]-L-lysyl-[protein] + 4 Fe(3+) + 2 hydrogen sulfide + 2 5'-deoxyadenosine + 2 L-methionine + 2 reduced [2Fe-2S]-[ferredoxin]. Its pathway is protein modification; protein lipoylation via endogenous pathway; protein N(6)-(lipoyl)lysine from octanoyl-[acyl-carrier-protein]: step 2/2. In terms of biological role, catalyzes the radical-mediated insertion of two sulfur atoms into the C-6 and C-8 positions of the octanoyl moiety bound to the lipoyl domains of lipoate-dependent enzymes, thereby converting the octanoylated domains into lipoylated derivatives. The polypeptide is Lipoyl synthase (Caldicellulosiruptor bescii (strain ATCC BAA-1888 / DSM 6725 / KCTC 15123 / Z-1320) (Anaerocellum thermophilum)).